The primary structure comprises 334 residues: Probable peptidoglycan endopeptidase LytE (334 aa).

Residues 1–25 form the signal peptide; the sequence is MKKQIITATTAVVLGSTLFAGAASA. 3 consecutive LysM domains span residues 26–69, 86–129, and 149–192; these read QSIK…TLSI, STYK…VLKL, and STYK…VLKV. 3 disordered regions span residues 70–89, 131–153, and 195–215; these read NGKS…STYK, GSTS…TYKV, and TSTS…KTSS. Low complexity-rich tracts occupy residues 72–87 and 132–153; these read KSTS…SSST and STSS…TYKV. Residues 217–334 enclose the NlpC/P60 domain; it reads SLNVSKLVSD…KPRYLGAKRF (118 aa). Catalysis depends on Cys247, which acts as the Nucleophile. Catalysis depends on His296, which acts as the Proton acceptor. Residue His308 is part of the active site.

It belongs to the peptidase C40 family.

The protein localises to the secreted. It localises to the cell wall. In terms of biological role, cell wall hydrolase that cleaves gamma-D-glutamate-meso-diaminopimelate bonds in peptidoglycan. Seems to play a role in cell separation during vegetative growth. This Bacillus subtilis (strain 168) protein is Probable peptidoglycan endopeptidase LytE (lytE).